We begin with the raw amino-acid sequence, 592 residues long: V-type ATP synthase alpha chain (592 aa).

232–239 (GPFGAGKT) contributes to the ATP binding site.

The protein belongs to the ATPase alpha/beta chains family.

The enzyme catalyses ATP + H2O + 4 H(+)(in) = ADP + phosphate + 5 H(+)(out). Its function is as follows. Produces ATP from ADP in the presence of a proton gradient across the membrane. The V-type alpha chain is a catalytic subunit. This Clostridium botulinum (strain Eklund 17B / Type B) protein is V-type ATP synthase alpha chain.